A 382-amino-acid chain; its full sequence is Anhydro-N-acetylmuramic acid kinase (382 aa).

22–29 (GTSMDGVD) contributes to the ATP binding site.

This sequence belongs to the anhydro-N-acetylmuramic acid kinase family.

It carries out the reaction 1,6-anhydro-N-acetyl-beta-muramate + ATP + H2O = N-acetyl-D-muramate 6-phosphate + ADP + H(+). It functions in the pathway amino-sugar metabolism; 1,6-anhydro-N-acetylmuramate degradation. It participates in cell wall biogenesis; peptidoglycan recycling. In terms of biological role, catalyzes the specific phosphorylation of 1,6-anhydro-N-acetylmuramic acid (anhMurNAc) with the simultaneous cleavage of the 1,6-anhydro ring, generating MurNAc-6-P. Is required for the utilization of anhMurNAc either imported from the medium or derived from its own cell wall murein, and thus plays a role in cell wall recycling. This Burkholderia orbicola (strain AU 1054) protein is Anhydro-N-acetylmuramic acid kinase.